Here is a 144-residue protein sequence, read N- to C-terminus: Large ribosomal subunit protein uL15 (144 aa).

The tract at residues 1–58 is disordered; the sequence is MRLNTLAPAAGSKHAPKRVGRGIGSGLGKTGGRGHKGQKSRSGGKVRPGFEGGQMPLK. The span at 21 to 31 shows a compositional bias: gly residues; it reads RGIGSGLGKTG. Basic residues predominate over residues 32-44; sequence GRGHKGQKSRSGG.

It belongs to the universal ribosomal protein uL15 family. As to quaternary structure, part of the 50S ribosomal subunit.

Functionally, binds to the 23S rRNA. This is Large ribosomal subunit protein uL15 from Vibrio parahaemolyticus serotype O3:K6 (strain RIMD 2210633).